Consider the following 29-residue polypeptide: Cytochrome b6-f complex subunit 8 (29 aa).

The chain crosses the membrane as a helical span at residues 3 to 23 (IVSFAWAALMVVFTFSLSLVV).

It belongs to the PetN family. The 4 large subunits of the cytochrome b6-f complex are cytochrome b6, subunit IV (17 kDa polypeptide, PetD), cytochrome f and the Rieske protein, while the 4 small subunits are PetG, PetL, PetM and PetN. The complex functions as a dimer.

It is found in the plastid. Its subcellular location is the chloroplast thylakoid membrane. Component of the cytochrome b6-f complex, which mediates electron transfer between photosystem II (PSII) and photosystem I (PSI), cyclic electron flow around PSI, and state transitions. This is Cytochrome b6-f complex subunit 8 from Phalaenopsis aphrodite subsp. formosana (Moth orchid).